The sequence spans 195 residues: ATP-dependent Clp protease proteolytic subunit (195 aa).

Residue S98 is the Nucleophile of the active site. H123 is an active-site residue.

The protein belongs to the peptidase S14 family. As to quaternary structure, fourteen ClpP subunits assemble into 2 heptameric rings which stack back to back to give a disk-like structure with a central cavity, resembling the structure of eukaryotic proteasomes.

It is found in the cytoplasm. It carries out the reaction Hydrolysis of proteins to small peptides in the presence of ATP and magnesium. alpha-casein is the usual test substrate. In the absence of ATP, only oligopeptides shorter than five residues are hydrolyzed (such as succinyl-Leu-Tyr-|-NHMec, and Leu-Tyr-Leu-|-Tyr-Trp, in which cleavage of the -Tyr-|-Leu- and -Tyr-|-Trp bonds also occurs).. Cleaves peptides in various proteins in a process that requires ATP hydrolysis. Has a chymotrypsin-like activity. Plays a major role in the degradation of misfolded proteins. The sequence is that of ATP-dependent Clp protease proteolytic subunit from Thermoanaerobacter pseudethanolicus (strain ATCC 33223 / 39E) (Clostridium thermohydrosulfuricum).